A 420-amino-acid polypeptide reads, in one-letter code: Glucose-1-phosphate adenylyltransferase (420 aa).

Residues Tyr-107, Gly-172, Glu-187–Lys-188, and Ser-205 contribute to the alpha-D-glucose 1-phosphate site.

Belongs to the bacterial/plant glucose-1-phosphate adenylyltransferase family. In terms of assembly, homotetramer.

It catalyses the reaction alpha-D-glucose 1-phosphate + ATP + H(+) = ADP-alpha-D-glucose + diphosphate. It functions in the pathway glycan biosynthesis; glycogen biosynthesis. In terms of biological role, involved in the biosynthesis of ADP-glucose, a building block required for the elongation reactions to produce glycogen. Catalyzes the reaction between ATP and alpha-D-glucose 1-phosphate (G1P) to produce pyrophosphate and ADP-Glc. This Rhizobium meliloti (strain 1021) (Ensifer meliloti) protein is Glucose-1-phosphate adenylyltransferase.